The following is a 592-amino-acid chain: MSFVGGGSECSVNGNAVAQFNKHTQQDRSLQQQVANQHGNVAQNQGFKKDNLMNVRDRANLDQFMNNGAPQNSFQFQPMRHELNTIQNQPNAIHQQQSNWSQDFVAQSPSAQITTPIAKTGSPVNAQWASEFSQAPATQQHNQRPGQFGPRLGGYRPMMGMSMAYQSQPQQQQQQQHNQEPQVDWENQFKEIEELTNKAEEVEEIQREQSPEIVVDDKYQATFQEVWDSLNSESFENDFINQQYEDFKRTQKDGFPADMNQWEKDFAKYASTRAHFGDYQFEDKQSNQFLDLPKDQDPYEIGLQLMENGAKLSEAALAFEAAIQRDENHVDAWLKLGEVQTQNEKEIAGISALEKCLELHPENSEALMNLAISYINEGYDNAAFATLERWISTKYPQIVEKARQENPTITDEDRFSLNKRVTELFLNAAQLSPNQASMDADVQMGLGVLFYANEEFDKTIDCFKAALSIRPDDAILWNRLGASLANSNRSEEAVDAYFKALQLKPTFVRARYNLGVSCINIGCYKEAAEHLLSGLSMHQVEGVDTVSTLNHNQSTSLTETLKRAFIAMERRDLLELVKPNMDLNQFRGEFSF.

A Glycyl cysteine thioester (Cys-Gly) (interchain with G-Cter in ubiquitin) cross-link involves residue Cys10. The tract at residues 11–33 is amphipathic helix 1 (AH1); sequence SVNGNAVAQFNKHTQQDRSLQQQ. A Glycyl lysine isopeptide (Lys-Gly) (interchain with G-Cter in ubiquitin) cross-link involves residue Lys22. The span at 22–46 shows a compositional bias: polar residues; sequence KHTQQDRSLQQQVANQHGNVAQNQG. The disordered stretch occupies residues 22–49; sequence KHTQQDRSLQQQVANQHGNVAQNQGFKK. Positions 58-76 are amphipathic helix 2 (AH2); it reads RANLDQFMNNGAPQNSFQF. 3 short sequence motifs (wxxxF/Y motif) span residues 100 to 104, 128 to 132, and 185 to 189; these read WSQDF, WASEF, and WENQF. The tract at residues 223–239 is amphipathic helix 4 (AH4); it reads FQEVWDSLNSESFENDF. Residues 262 to 266 carry the WxxxF/Y motif 4 motif; it reads WEKDF. TPR repeat units follow at residues 295–329, 330–363, 440–473, 475–507, and 509–541; these read DQDPYEIGLQLMENGAKLSEAALAFEAAIQRDENH, VDAWLKLGEVQTQNEKEIAGISALEKCLELHPEN, ADVQMGLGVLFYANEEFDKTIDCFKAALSIRPDD, ILWNRLGASLANSNRSEEAVDAYFKALQLKPTF, and RARYNLGVSCINIGCYKEAAEHLLSGLSMHQVE.

It belongs to the peroxisomal targeting signal receptor family. In terms of assembly, interacts (via WxxxF/Y and LVxEF motifs) with PEX14; promoting translocation through the PEX13-PEX14 docking complex. Monoubiquitinated at Cys-10 by PEX2 during PEX5 passage through the retrotranslocation channel: monoubiquitination acts as a signal for PEX5 extraction and is required for proper export from peroxisomes and recycling. When PEX5 recycling is compromised, polyubiquitinated at Lys-22 by PEX10 during its passage through the retrotranslocation channel, leading to its degradation.

The protein resides in the cytoplasm. The protein localises to the cytosol. Its subcellular location is the peroxisome matrix. In terms of biological role, receptor that mediates peroxisomal import of proteins containing a C-terminal PTS1-type tripeptide peroxisomal targeting signal (SKL-type). Binds to cargo proteins containing a PTS1 peroxisomal targeting signal in the cytosol, and translocates them into the peroxisome matrix by passing through the PEX13-PEX14 docking complex along with cargo proteins. PEX5 receptor is then retrotranslocated into the cytosol, leading to release of bound cargo in the peroxisome matrix, and reset for a subsequent peroxisome import cycle. The protein is Peroxisomal targeting signal receptor (PEX5) of Candida albicans (strain SC5314 / ATCC MYA-2876) (Yeast).